Consider the following 227-residue polypeptide: 2-C-methyl-D-erythritol 4-phosphate cytidylyltransferase (227 aa).

It belongs to the IspD/TarI cytidylyltransferase family. IspD subfamily.

The catalysed reaction is 2-C-methyl-D-erythritol 4-phosphate + CTP + H(+) = 4-CDP-2-C-methyl-D-erythritol + diphosphate. It participates in isoprenoid biosynthesis; isopentenyl diphosphate biosynthesis via DXP pathway; isopentenyl diphosphate from 1-deoxy-D-xylulose 5-phosphate: step 2/6. In terms of biological role, catalyzes the formation of 4-diphosphocytidyl-2-C-methyl-D-erythritol from CTP and 2-C-methyl-D-erythritol 4-phosphate (MEP). This is 2-C-methyl-D-erythritol 4-phosphate cytidylyltransferase from Deinococcus geothermalis (strain DSM 11300 / CIP 105573 / AG-3a).